Reading from the N-terminus, the 204-residue chain is ATP-dependent Clp protease proteolytic subunit (204 aa).

Residue Ser102 is the Nucleophile of the active site. Residue His127 is part of the active site.

This sequence belongs to the peptidase S14 family. Fourteen ClpP subunits assemble into 2 heptameric rings which stack back to back to give a disk-like structure with a central cavity, resembling the structure of eukaryotic proteasomes.

It localises to the cytoplasm. The catalysed reaction is Hydrolysis of proteins to small peptides in the presence of ATP and magnesium. alpha-casein is the usual test substrate. In the absence of ATP, only oligopeptides shorter than five residues are hydrolyzed (such as succinyl-Leu-Tyr-|-NHMec, and Leu-Tyr-Leu-|-Tyr-Trp, in which cleavage of the -Tyr-|-Leu- and -Tyr-|-Trp bonds also occurs).. Functionally, cleaves peptides in various proteins in a process that requires ATP hydrolysis. Has a chymotrypsin-like activity. Plays a major role in the degradation of misfolded proteins. This Neisseria gonorrhoeae (strain ATCC 700825 / FA 1090) protein is ATP-dependent Clp protease proteolytic subunit.